The sequence spans 352 residues: MSEGDLAVMKPETMKSYIWLQTADGSIQQVEQEVAMFCPMICQEVIQKGVGSSKNHAISLPQRVNPAMFSLILDYCRFHQLPGRSNKERKTYDERFIRMDTKRLCELTSAADSLQLKPLVDLTSRALARIIEGKNPEEIREIFHLPDDLTEEEKLEPLKNSMDDPRIRLLNRLYAKKRKELKERERLKNVEVEEHVDERSVDDLLSFINGRDHKAVKMSKGKKKKKKKKDQKIVSSNNIHDKESHDLRSKQQCVEEIGSSMREVPNLLSAEDDISTPNAGSEDEDIDDEIDPAMRELLDREVEDFAQRLNSNWVRSLGKERRPVHFSINGNGTTRRHTGMVSIWRPCMFTLF.

Positions 108 to 167 are interaction with the F-box domain of F-box proteins; it reads TSAADSLQLKPLVDLTSRALARIIEGKNPEEIREIFHLPDDLTEEEKLEPLKNSMDDPRI. Disordered stretches follow at residues 214-251 and 267-288; these read KAVK…RSKQ and LLSA…DIDD. The span at 216–230 shows a compositional bias: basic residues; that stretch reads VKMSKGKKKKKKKKD. Over residues 239–249 the composition is skewed to basic and acidic residues; that stretch reads IHDKESHDLRS.

This sequence belongs to the SKP1 family. Part of a SCF (SKP1-cullin-F-box) protein ligase complex. Expressed in young seedlings, roots, leaves, floral stems, inflorescences, and siliques.

It localises to the nucleus. The protein operates within protein modification; protein ubiquitination. Its function is as follows. Involved in ubiquitination and subsequent proteasomal degradation of target proteins. Together with CUL1, RBX1 and a F-box protein, it forms a SCF E3 ubiquitin ligase complex. The functional specificity of this complex depends on the type of F-box protein. In the SCF complex, it serves as an adapter that links the F-box protein to CUL1. This is SKP1-like protein 20 (ASK20) from Arabidopsis thaliana (Mouse-ear cress).